A 447-amino-acid chain; its full sequence is Na(+)-translocating NADH-quinone reductase subunit A (447 aa).

This sequence belongs to the NqrA family. In terms of assembly, composed of six subunits; NqrA, NqrB, NqrC, NqrD, NqrE and NqrF.

It carries out the reaction a ubiquinone + n Na(+)(in) + NADH + H(+) = a ubiquinol + n Na(+)(out) + NAD(+). Functionally, NQR complex catalyzes the reduction of ubiquinone-1 to ubiquinol by two successive reactions, coupled with the transport of Na(+) ions from the cytoplasm to the periplasm. NqrA to NqrE are probably involved in the second step, the conversion of ubisemiquinone to ubiquinol. This is Na(+)-translocating NADH-quinone reductase subunit A from Hahella chejuensis (strain KCTC 2396).